The chain runs to 438 residues: MKVTFKKDYLKDFVADSEVELLKPTAGFVRDTLLARTGVGNEMEDWLTLPSDYDKEEFARILKVADKIKSDSKVLVVIGIGGSYLGARAVIEFLKSEFHNEKANKEGLPEVYFVGTSASGRYIDDVIDLIGNRDFSINIISKSGTTTEPAIAFRTFKSLIEKKYGKEEASKRIFATTDAHKGALLNVAKENGYERFVVPDGIGGRYSVLSAVGLLPIAVAGINIQKLMDGAKAAQEEFAKDEDILNKPSILYAIYRNILYRKGFDVETIVGYEPQFRFLFEWWKQLMAESEGKDNKGIYPTSAIFSTDLHSIGQYIQDGKKILFETILDITKPISDRVVPSADDNTDNLDYILNKPMKEVNEAALTATAQAHTSAGVPNILLQLDDLDEFNLGNLIYFFEAAVAVSGYLDGINPFDQPGVEIYKTNMFKILGKPGYTD.

E289 (proton donor) is an active-site residue. Residues H310 and K424 contribute to the active site.

The protein belongs to the GPI family.

The protein localises to the cytoplasm. The catalysed reaction is alpha-D-glucose 6-phosphate = beta-D-fructose 6-phosphate. The protein operates within carbohydrate biosynthesis; gluconeogenesis. Its pathway is carbohydrate degradation; glycolysis; D-glyceraldehyde 3-phosphate and glycerone phosphate from D-glucose: step 2/4. In terms of biological role, catalyzes the reversible isomerization of glucose-6-phosphate to fructose-6-phosphate. This Oenococcus oeni (strain ATCC BAA-331 / PSU-1) protein is Glucose-6-phosphate isomerase.